We begin with the raw amino-acid sequence, 536 residues long: Dual specificity calcium/calmodulin-dependent 3',5'-cyclic nucleotide phosphodiesterase 1B (536 aa).

The interval 1–20 is disordered; sequence MELSPRSPPEMLEESDCPSP. Serine 7 and serine 15 each carry phosphoserine. Calmodulin-binding stretches follow at residues 27–47 and 118–141; these read PSKKMWIKLRSLLRYMVKQLE and EKPKFRSIVHAVQAGIFVERMFRR. Positions 146-503 constitute a PDEase domain; sequence VGPTYSTAVL…QKWKERAASG (358 aa). The active-site Proton donor is histidine 223. Positions 227, 263, 264, and 370 each coordinate Zn(2+). Residue aspartate 264 coordinates Mg(2+). Disordered stretches follow at residues 447-474 and 494-536; these read LADEDSKSKNQPSFQWRQPSLDVEVGDP and QKWK…GNLD. The segment covering 455–464 has biased composition (polar residues); the sequence is KNQPSFQWRQ. Phosphoserine occurs at positions 466 and 514.

This sequence belongs to the cyclic nucleotide phosphodiesterase family. PDE1 subfamily. As to quaternary structure, homodimer. Requires Zn(2+) as cofactor. Mg(2+) is required as a cofactor.

It is found in the cytoplasm. The protein resides in the cytosol. The catalysed reaction is a nucleoside 3',5'-cyclic phosphate + H2O = a nucleoside 5'-phosphate + H(+). It catalyses the reaction 3',5'-cyclic GMP + H2O = GMP + H(+). It carries out the reaction 3',5'-cyclic AMP + H2O = AMP + H(+). With respect to regulation, type I PDE are activated by the binding of calmodulin in the presence of Ca(2+). Functionally, cyclic nucleotide phosphodiesterase with a dual specificity for the second messengers cAMP and cGMP, which are key regulators of many important physiological processes. Has a preference for cGMP as a substrate. The chain is Dual specificity calcium/calmodulin-dependent 3',5'-cyclic nucleotide phosphodiesterase 1B from Homo sapiens (Human).